The sequence spans 145 residues: Transcription antitermination protein NusB (145 aa).

Belongs to the NusB family.

Its function is as follows. Involved in transcription antitermination. Required for transcription of ribosomal RNA (rRNA) genes. Binds specifically to the boxA antiterminator sequence of the ribosomal RNA (rrn) operons. The polypeptide is Transcription antitermination protein NusB (Aromatoleum aromaticum (strain DSM 19018 / LMG 30748 / EbN1) (Azoarcus sp. (strain EbN1))).